The sequence spans 150 residues: Transthyretin (150 aa).

The signal sequence occupies residues 1 to 20 (MAFHSMLLVFLAGLVFLTEA). Cysteine 33 is modified (sulfocysteine). L-thyroxine contacts are provided by lysine 38, glutamate 77, and serine 140.

It belongs to the transthyretin family. In terms of assembly, homotetramer. Dimer of dimers. In the homotetramer, subunits assemble around a central channel that can accommodate two ligand molecules. Interacts with RBP4. In terms of processing, sulfonation of the reactive cysteine Cys-33 enhances the stability of the native conformation of TTR, avoiding misassembly of the protein leading to amyloid formation. In terms of tissue distribution, strongly expressed in the brain, and to a lesser extent in the eye.

The protein resides in the secreted. In terms of biological role, thyroid hormone-binding protein, with a much higher binding affinity for triiodothyronine (T3) than for thyroxine (T4). Probably transports triiodothyronine from the bloodstream to the brain. The chain is Transthyretin (TTR) from Crocodylus porosus (Saltwater crocodile).